Here is a 52-residue protein sequence, read N- to C-terminus: Venom peptide 4a (52 aa).

The signal sequence occupies residues 1 to 23 (MRSAILLVIVAIVAILGFLGVNA). AXPX repeat units lie at residues 23–26 (AEPL), 31–34 (AEPN), and 39–42 (AAPL). A propeptide spanning residues 24–41 (EPLPSPLAEPNPHAKAAP) is cleaved from the precursor. An Alanine amide modification is found at alanine 51.

Expressed by the venom gland.

Its subcellular location is the secreted. The sequence is that of Venom peptide 4a from Eumenes pomiformis (Potter wasp).